Consider the following 300-residue polypeptide: Urease accessory protein UreD (300 aa).

Belongs to the UreD family. In terms of assembly, ureD, UreF and UreG form a complex that acts as a GTP-hydrolysis-dependent molecular chaperone, activating the urease apoprotein by helping to assemble the nickel containing metallocenter of UreC. The UreE protein probably delivers the nickel.

It localises to the cytoplasm. Required for maturation of urease via the functional incorporation of the urease nickel metallocenter. In Prochlorococcus marinus (strain MIT 9215), this protein is Urease accessory protein UreD.